The sequence spans 384 residues: Anhydro-N-acetylmuramic acid kinase (384 aa).

ATP is bound at residue 17-24 (GTSMDGVD).

Belongs to the anhydro-N-acetylmuramic acid kinase family.

It catalyses the reaction 1,6-anhydro-N-acetyl-beta-muramate + ATP + H2O = N-acetyl-D-muramate 6-phosphate + ADP + H(+). It functions in the pathway amino-sugar metabolism; 1,6-anhydro-N-acetylmuramate degradation. The protein operates within cell wall biogenesis; peptidoglycan recycling. Functionally, catalyzes the specific phosphorylation of 1,6-anhydro-N-acetylmuramic acid (anhMurNAc) with the simultaneous cleavage of the 1,6-anhydro ring, generating MurNAc-6-P. Is required for the utilization of anhMurNAc either imported from the medium or derived from its own cell wall murein, and thus plays a role in cell wall recycling. The polypeptide is Anhydro-N-acetylmuramic acid kinase (Burkholderia thailandensis (strain ATCC 700388 / DSM 13276 / CCUG 48851 / CIP 106301 / E264)).